The following is a 206-amino-acid chain: ATP-dependent Clp protease proteolytic subunit 1 (206 aa).

Ser100 serves as the catalytic Nucleophile. Residue His125 is part of the active site.

The protein belongs to the peptidase S14 family. Fourteen ClpP subunits assemble into 2 heptameric rings which stack back to back to give a disk-like structure with a central cavity, resembling the structure of eukaryotic proteasomes.

The protein resides in the cytoplasm. It carries out the reaction Hydrolysis of proteins to small peptides in the presence of ATP and magnesium. alpha-casein is the usual test substrate. In the absence of ATP, only oligopeptides shorter than five residues are hydrolyzed (such as succinyl-Leu-Tyr-|-NHMec, and Leu-Tyr-Leu-|-Tyr-Trp, in which cleavage of the -Tyr-|-Leu- and -Tyr-|-Trp bonds also occurs).. Its function is as follows. Cleaves peptides in various proteins in a process that requires ATP hydrolysis. Has a chymotrypsin-like activity. Plays a major role in the degradation of misfolded proteins. The protein is ATP-dependent Clp protease proteolytic subunit 1 of Myxococcus xanthus (strain DK1622).